A 172-amino-acid polypeptide reads, in one-letter code: Small ribosomal subunit protein uS5 (172 aa).

In terms of domain architecture, S5 DRBM spans 15-78 (YIEKLVNIRR…DKARKRMKSV (64 aa)).

It belongs to the universal ribosomal protein uS5 family. In terms of assembly, part of the 30S ribosomal subunit. Contacts proteins S4 and S8.

In terms of biological role, with S4 and S12 plays an important role in translational accuracy. Functionally, located at the back of the 30S subunit body where it stabilizes the conformation of the head with respect to the body. In Ruthia magnifica subsp. Calyptogena magnifica, this protein is Small ribosomal subunit protein uS5.